We begin with the raw amino-acid sequence, 219 residues long: Phosphatidylserine decarboxylase proenzyme (219 aa).

Serine 188 functions as the Schiff-base intermediate with substrate; via pyruvic acid in the catalytic mechanism. Serine 188 bears the Pyruvic acid (Ser); by autocatalysis mark.

This sequence belongs to the phosphatidylserine decarboxylase family. PSD-A subfamily. Heterodimer of a large membrane-associated beta subunit and a small pyruvoyl-containing alpha subunit. Requires pyruvate as cofactor. Is synthesized initially as an inactive proenzyme. Formation of the active enzyme involves a self-maturation process in which the active site pyruvoyl group is generated from an internal serine residue via an autocatalytic post-translational modification. Two non-identical subunits are generated from the proenzyme in this reaction, and the pyruvate is formed at the N-terminus of the alpha chain, which is derived from the carboxyl end of the proenzyme. The post-translation cleavage follows an unusual pathway, termed non-hydrolytic serinolysis, in which the side chain hydroxyl group of the serine supplies its oxygen atom to form the C-terminus of the beta chain, while the remainder of the serine residue undergoes an oxidative deamination to produce ammonia and the pyruvoyl prosthetic group on the alpha chain.

The protein resides in the cell membrane. It carries out the reaction a 1,2-diacyl-sn-glycero-3-phospho-L-serine + H(+) = a 1,2-diacyl-sn-glycero-3-phosphoethanolamine + CO2. The protein operates within phospholipid metabolism; phosphatidylethanolamine biosynthesis; phosphatidylethanolamine from CDP-diacylglycerol: step 2/2. Catalyzes the formation of phosphatidylethanolamine (PtdEtn) from phosphatidylserine (PtdSer). The polypeptide is Phosphatidylserine decarboxylase proenzyme (Ruegeria pomeroyi (strain ATCC 700808 / DSM 15171 / DSS-3) (Silicibacter pomeroyi)).